The following is a 465-amino-acid chain: Histidine--tRNA ligase (465 aa).

It belongs to the class-II aminoacyl-tRNA synthetase family. In terms of assembly, homodimer.

The protein resides in the cytoplasm. It catalyses the reaction tRNA(His) + L-histidine + ATP = L-histidyl-tRNA(His) + AMP + diphosphate + H(+). In Pelagibacter ubique (strain HTCC1062), this protein is Histidine--tRNA ligase (hisS).